Reading from the N-terminus, the 155-residue chain is DNA-directed RNA polymerase 1A (155 aa).

Asp88 is a catalytic residue.

It belongs to the phage and mitochondrial RNA polymerase family.

The enzyme catalyses RNA(n) + a ribonucleoside 5'-triphosphate = RNA(n+1) + diphosphate. Its function is as follows. DNA-dependent RNA polymerase catalyzes the transcription of DNA into RNA using the four ribonucleoside triphosphates as substrates. This Nicotiana tabacum (Common tobacco) protein is DNA-directed RNA polymerase 1A (RPOT1-SYL).